Reading from the N-terminus, the 58-residue chain is Large ribosomal subunit protein uL30 (58 aa).

The protein belongs to the universal ribosomal protein uL30 family. Part of the 50S ribosomal subunit.

The polypeptide is Large ribosomal subunit protein uL30 (Acinetobacter baumannii (strain AB307-0294)).